Here is a 231-residue protein sequence, read N- to C-terminus: eRF1 methyltransferase catalytic subunit mtq2 (231 aa).

S-adenosyl-L-methionine is bound by residues glycine 54–glycine 58, aspartate 80, and asparagine 130. Asparagine 130–tyrosine 133 contributes to the substrate binding site.

This sequence belongs to the eukaryotic/archaeal PrmC-related family. Heterodimer of mtq2-trm112. mtq2 is the catalytic subunit carrying the catalytic and the S-adenosyl L-methionine binding sites.

It localises to the cytoplasm. It is found in the nucleus. It catalyses the reaction L-glutaminyl-[peptide chain release factor] + S-adenosyl-L-methionine = N(5)-methyl-L-glutaminyl-[peptide chain release factor] + S-adenosyl-L-homocysteine + H(+). Its function is as follows. Methylates eRF1 on 'Gln-182' using S-adenosyl L-methionine as methyl donor. eRF1 needs to be complexed to eRF3 in its GTP-bound form to be efficiently methylated. In Schizosaccharomyces pombe (strain 972 / ATCC 24843) (Fission yeast), this protein is eRF1 methyltransferase catalytic subunit mtq2 (mtq2).